Reading from the N-terminus, the 97-residue chain is Large ribosomal subunit protein uL23 (97 aa).

It belongs to the universal ribosomal protein uL23 family. Part of the 50S ribosomal subunit. Contacts protein L29, and trigger factor when it is bound to the ribosome.

Functionally, one of the early assembly proteins it binds 23S rRNA. One of the proteins that surrounds the polypeptide exit tunnel on the outside of the ribosome. Forms the main docking site for trigger factor binding to the ribosome. This Limosilactobacillus fermentum (strain NBRC 3956 / LMG 18251) (Lactobacillus fermentum) protein is Large ribosomal subunit protein uL23.